The chain runs to 943 residues: AP-1 complex subunit beta-1 (943 aa).

Lysine 318 is subject to N6-acetyllysine. Position 574 is a 3'-nitrotyrosine (tyrosine 574). A disordered region spans residues 584–621 (GGRGVVHKSLPPRTASSESTESPETAPAGAPAGDQPDV). The span at 594–616 (PPRTASSESTESPETAPAGAPAG) shows a compositional bias: low complexity.

Belongs to the adaptor complexes large subunit family. Adaptor protein complex 1 (AP-1) is a heterotetramer composed of two large adaptins (gamma-type subunit AP1G1 and beta-type subunit AP1B1), a medium adaptin (mu-type subunit AP1M1 or AP1M2) and a small adaptin (sigma-type subunit AP1S1 or AP1S2 or AP1S3). In terms of tissue distribution, widely expressed.

The protein resides in the cytoplasmic vesicle. It is found in the clathrin-coated vesicle membrane. The protein localises to the golgi apparatus. Its function is as follows. Subunit of clathrin-associated adaptor protein complex 1 that plays a role in protein sorting in the late-Golgi/trans-Golgi network (TGN) and/or endosomes. The AP complexes mediate both the recruitment of clathrin to membranes and the recognition of sorting signals within the cytosolic tails of transmembrane cargo molecules. This Mus musculus (Mouse) protein is AP-1 complex subunit beta-1 (Ap1b1).